The following is a 692-amino-acid chain: Potassium-transporting ATPase ATP-binding subunit (692 aa).

A run of 4 helical transmembrane segments spans residues 50 to 70, 74 to 94, 240 to 260, and 266 to 286; these read PIMFVVEIGFVITFILSFLPS, SIPGWFNITVSLILLFTVLFA, LTLIFLIVVVTLPIFTNYLGF, and VLVALLVCLIPTTIGGLLSAI. D319 serves as the catalytic 4-aspartylphosphate intermediate. ATP is bound by residues D356, E360, 388–395, and K407; that span reads FKAETRMS. Mg(2+)-binding residues include D530 and D534. Transmembrane regions (helical) follow at residues 600–620, 628–648, and 672–692; these read FAIIPAMFTLAIPQMEALNIM, AILSALLFNAVIIPLLIPLAM, and GGVIVPFIGIKIIDMIVGLFI.

Belongs to the cation transport ATPase (P-type) (TC 3.A.3) family. Type IA subfamily. In terms of assembly, the system is composed of three essential subunits: KdpA, KdpB and KdpC.

It is found in the cell membrane. It catalyses the reaction K(+)(out) + ATP + H2O = K(+)(in) + ADP + phosphate + H(+). Part of the high-affinity ATP-driven potassium transport (or Kdp) system, which catalyzes the hydrolysis of ATP coupled with the electrogenic transport of potassium into the cytoplasm. This subunit is responsible for energy coupling to the transport system and for the release of the potassium ions to the cytoplasm. The polypeptide is Potassium-transporting ATPase ATP-binding subunit (Bacillus thuringiensis (strain Al Hakam)).